The following is a 327-amino-acid chain: Biotin synthase (327 aa).

The 227-residue stretch at 42–268 (NKVQKASLLS…VMPASTVRLS (227 aa)) folds into the Radical SAM core domain. Positions 57, 61, and 64 each coordinate [4Fe-4S] cluster. Cysteine 102, cysteine 134, cysteine 194, and arginine 266 together coordinate [2Fe-2S] cluster.

Belongs to the radical SAM superfamily. Biotin synthase family. In terms of assembly, homodimer. The cofactor is [4Fe-4S] cluster. [2Fe-2S] cluster is required as a cofactor.

The catalysed reaction is (4R,5S)-dethiobiotin + (sulfur carrier)-SH + 2 reduced [2Fe-2S]-[ferredoxin] + 2 S-adenosyl-L-methionine = (sulfur carrier)-H + biotin + 2 5'-deoxyadenosine + 2 L-methionine + 2 oxidized [2Fe-2S]-[ferredoxin]. Its pathway is cofactor biosynthesis; biotin biosynthesis; biotin from 7,8-diaminononanoate: step 2/2. Functionally, catalyzes the conversion of dethiobiotin (DTB) to biotin by the insertion of a sulfur atom into dethiobiotin via a radical-based mechanism. This is Biotin synthase from Rhizobium rhizogenes (strain K84 / ATCC BAA-868) (Agrobacterium radiobacter).